We begin with the raw amino-acid sequence, 141 residues long: Large ribosomal subunit protein uL11 (141 aa).

This sequence belongs to the universal ribosomal protein uL11 family. Part of the ribosomal stalk of the 50S ribosomal subunit. Interacts with L10 and the large rRNA to form the base of the stalk. L10 forms an elongated spine to which L12 dimers bind in a sequential fashion forming a multimeric L10(L12)X complex. One or more lysine residues are methylated.

Functionally, forms part of the ribosomal stalk which helps the ribosome interact with GTP-bound translation factors. The sequence is that of Large ribosomal subunit protein uL11 from Roseiflexus sp. (strain RS-1).